The sequence spans 347 residues: Protein RecA (347 aa).

Residue 66–73 (GPESSGKT) coordinates ATP. The segment at 328–347 (MPKPNAPKATDEALDETGTD) is disordered.

The protein belongs to the RecA family.

Its subcellular location is the cytoplasm. Can catalyze the hydrolysis of ATP in the presence of single-stranded DNA, the ATP-dependent uptake of single-stranded DNA by duplex DNA, and the ATP-dependent hybridization of homologous single-stranded DNAs. It interacts with LexA causing its activation and leading to its autocatalytic cleavage. This chain is Protein RecA, found in Hydrogenovibrio crunogenus (strain DSM 25203 / XCL-2) (Thiomicrospira crunogena).